The primary structure comprises 93 residues: Acylphosphatase (93 aa).

The region spanning 7–93 (RAHVFVSGTV…EGIDGFHIRR (87 aa)) is the Acylphosphatase-like domain. Catalysis depends on residues Arg-22 and Asn-40.

The protein belongs to the acylphosphatase family.

The enzyme catalyses an acyl phosphate + H2O = a carboxylate + phosphate + H(+). The polypeptide is Acylphosphatase (acyP) (Haloquadratum walsbyi (strain DSM 16790 / HBSQ001)).